The chain runs to 209 residues: Protein lin-28 homolog A (209 aa).

The segment at 1–31 is disordered; it reads MGSVSNQQFAGGCAKAAEEAPEEAPEDAARA. G2 carries the N-acetylglycine modification. Phosphoserine is present on S3. Residues 39 to 112 enclose the CSD domain; it reads HGAGICKWFN…GLESIRVTGP (74 aa). The flexible linker stretch occupies residues 113-136; sequence GGVFCIGSERRPKGKSMQKRRSKG. Residue S120 is modified to Phosphoserine. 2 consecutive CCHC-type zinc fingers follow at residues 137-154 and 159-176; these read DRCY…ECKL and KKCH…SCPL. The interval 178 to 209 is disordered; sequence AQQGPSAQGKPTYFREEEEEIHSPTLLPEAQN. S200 bears the Phosphoserine mark.

Belongs to the lin-28 family. As to quaternary structure, monomer. During skeletal muscle differentiation, associated with translation initiation complexes in the polysomal compartment. Directly interacts with EIF3S2. Interacts with NCL in an RNA-dependent manner. Interacts (via C-terminus) with DHX9 (via N- and C-terminus); this interaction occurs in a RNA-independent manner. Interacts with TUT4 in the presence of pre-let-7 RNA. In terms of tissue distribution, expressed in embryonic stem cells, placenta and testis. Tends to be up-regulated in HER2-overexpressing breast tumors.

Its subcellular location is the cytoplasm. It is found in the rough endoplasmic reticulum. It localises to the P-body. The protein resides in the stress granule. The protein localises to the nucleus. Its subcellular location is the nucleolus. Functionally, RNA-binding protein that inhibits processing of pre-let-7 miRNAs and regulates translation of mRNAs that control developmental timing, pluripotency and metabolism. Seems to recognize a common structural G-quartet (G4) feature in its miRNA and mRNA targets. 'Translational enhancer' that drives specific mRNAs to polysomes and increases the efficiency of protein synthesis. Its association with the translational machinery and target mRNAs results in an increased number of initiation events per molecule of mRNA and, indirectly, in mRNA stabilization. Binds IGF2 mRNA, MYOD1 mRNA, ARBP/36B4 ribosomal protein mRNA and its own mRNA. Essential for skeletal muscle differentiation program through the translational up-regulation of IGF2 expression. Suppressor of microRNA (miRNA) biogenesis, including that of let-7, miR107, miR-143 and miR-200c. Specifically binds the miRNA precursors (pre-miRNAs), recognizing an 5'-GGAG-3' motif found in pre-miRNA terminal loop, and recruits TUT4 and TUT7 uridylyltransferases. This results in the terminal uridylation of target pre-miRNAs. Uridylated pre-miRNAs fail to be processed by Dicer and undergo degradation. The repression of let-7 expression is required for normal development and contributes to maintain the pluripotent state by preventing let-7-mediated differentiation of embryonic stem cells. Localized to the periendoplasmic reticulum area, binds to a large number of spliced mRNAs and inhibits the translation of mRNAs destined for the ER, reducing the synthesis of transmembrane proteins, ER or Golgi lumen proteins, and secretory proteins. Binds to and enhances the translation of mRNAs for several metabolic enzymes, such as PFKP, PDHA1 or SDHA, increasing glycolysis and oxidative phosphorylation. Which, with the let-7 repression may enhance tissue repair in adult tissue. This Homo sapiens (Human) protein is Protein lin-28 homolog A (LIN28A).